Here is a 428-residue protein sequence, read N- to C-terminus: Phosphoribosylamine--glycine ligase (428 aa).

In terms of domain architecture, ATP-grasp spans 109-316 (KDFLHRHGIP…LVELCLAALD (208 aa)). Residue 135–196 (LRQVGAPVVV…EEFLTGEEAS (62 aa)) participates in ATP binding. The tract at residues 211–235 (SSQDHKARDDGDRGPNTGGMGAYSP) is disordered. Over residues 213-223 (QDHKARDDGDR) the composition is skewed to basic and acidic residues. Residues glutamate 286 and asparagine 288 each coordinate Mg(2+).

It belongs to the GARS family. Mg(2+) is required as a cofactor. Mn(2+) serves as cofactor.

The enzyme catalyses 5-phospho-beta-D-ribosylamine + glycine + ATP = N(1)-(5-phospho-beta-D-ribosyl)glycinamide + ADP + phosphate + H(+). It participates in purine metabolism; IMP biosynthesis via de novo pathway; N(1)-(5-phospho-D-ribosyl)glycinamide from 5-phospho-alpha-D-ribose 1-diphosphate: step 2/2. The polypeptide is Phosphoribosylamine--glycine ligase (purD) (Allochromatium vinosum (strain ATCC 17899 / DSM 180 / NBRC 103801 / NCIMB 10441 / D) (Chromatium vinosum)).